A 558-amino-acid polypeptide reads, in one-letter code: ATP-dependent RNA helicase ROK1 (558 aa).

Residues 26 to 91 form a disordered region; sequence PSAKQQQYEQ…EEAPPLEIQT (66 aa). Composition is skewed to basic and acidic residues over residues 34–53 and 64–81; these read EQHK…DFFH and DSTD…KKED. The short motif at 120–148 is the Q motif element; the sequence is DMIGRFRLDSKLLSNLLEAEFVEPTAIQC. Positions 151–329 constitute a Helicase ATP-binding domain; the sequence is LPISLSGRDL…HSIMRDPIRV (179 aa). An ATP-binding site is contributed by 164–171; that stretch reads APTGSGKT. Residues 276 to 279 carry the DEAD box motif; that stretch reads DEAD. A Helicase C-terminal domain is found at 340–504; the sequence is TIDQKLVFTG…GFSGWMENMT (165 aa). A disordered region spans residues 509–558; that stretch reads NEKKKVKHKEIDRKDISTVPKLVKHKRKQREQMIEASKKRKQEETRNALQ. Residues 538–558 show a composition bias toward basic and acidic residues; that stretch reads REQMIEASKKRKQEETRNALQ.

The protein belongs to the DEAD box helicase family. DDX52/ROK1 subfamily. As to quaternary structure, interacts with the U3 snoRNA and is associated with the 90S and 40S pre-ribosomes.

Its subcellular location is the nucleus. The protein resides in the nucleolus. It carries out the reaction ATP + H2O = ADP + phosphate + H(+). ATP-dependent RNA helicase involved in 40S ribosomal subunit biogenesis. Required for the processing and cleavage of 35S pre-rRNA at sites A0, A1, and A2, leading to mature 18S rRNA. In Scheffersomyces stipitis (strain ATCC 58785 / CBS 6054 / NBRC 10063 / NRRL Y-11545) (Yeast), this protein is ATP-dependent RNA helicase ROK1 (ROK1).